A 315-amino-acid chain; its full sequence is Eukaryotic translation initiation factor 2 subunit 1 (315 aa).

The S1 motif domain maps to 17 to 88; the sequence is EDVVMVNVRS…EKGYIDLSKR (72 aa). At Ser-49 the chain carries Phosphoserine; by HRI. Ser-52 is modified (phosphoserine). Lys-141 is subject to N6-acetyllysine. At Ser-158 the chain carries Phosphoserine. A phosphothreonine mark is found at Thr-279 and Thr-281. The disordered stretch occupies residues 292 to 315; sequence RLERENAEVDGDDDAEEMEAKAED. Acidic residues predominate over residues 299–308; sequence EVDGDDDAEE.

Belongs to the eIF-2-alpha family. Eukaryotic translation initiation factor 2 eIF2 is a heterotrimeric complex composed of an alpha (EIF2S1), a beta (EIF2S2) and a gamma (EIF2S3) chain. eIF2 is member of the 43S pre-initiation complex (43S PIC). eIF2 forms a complex with at least CELF1/CUGBP1, CALR, CALR3, EIF2S1, EIF2S2, HSP90B1 and HSPA5. Interaction with METAP2 protects EIF2S1 from inhibitory phosphorylation. Interacts with ABCF1. Associates with ribosomes. Interacts with DDX3X in an RNA-independent manner. Post-translationally, phosphorylation at Ser-49 and Ser-52 stabilizes the eIF-2/GDP/eIF2B complex and prevents GDP/GTP exchange reaction, thus impairing the recycling of eIF-2 between successive rounds of initiation and leading to global inhibition of translation, while concomitantly initiating the preferential translation of integrated stress response (ISR)-specific mRNAs. Substrate for at least 4 kinases: EIF2AK1/HRI, EIF2AK2/PKR, EIF2AK3/PERK and EIF2AK4/GCN2. Phosphorylation at Ser-52 by the EIF2AK3/PERK protein kinase occurs in response to the unfolded protein response. Phosphorylation on Ser-52 by the EIF2AK4/GCN2 protein kinase occurs in response to amino acid starvation and UV irradiation. Phosphorylation at Ser-52 by EIF2AK1/HRI in response to mitochondrial damage promotes relocalization to the mitochondrial surface.

It localises to the cytoplasm. The protein resides in the stress granule. It is found in the cytosol. Its subcellular location is the mitochondrion. Its activity is regulated as follows. Activity is regulated by phosphorylation at Ser-49 and Ser-52, which stabilizes the eIF2/GDP/eIF2B complex and prevents the eIF2B-mediated exchange of GDP for GTP, thereby preventing the formation of the 43S pre-initiation complex (43S PIC). This results in the global attenuation of 5' cap-dependent protein synthesis and concomitant translation of ISR-specific mRNAs that contain a short upstream open reading frame (uORF) in their 5' UTR, such as ATF4, ATF5, DDIT3/CHOP and PPP1R15A/GADD34. Functionally, member of the eIF2 complex that functions in the early steps of protein synthesis by forming a ternary complex with GTP and initiator tRNA. This complex binds to a 40S ribosomal subunit, followed by mRNA binding to form a 43S pre-initiation complex. Junction of the 60S ribosomal subunit to form the 80S initiation complex is preceded by hydrolysis of the GTP bound to eIF2 and release of an eIF2-GDP binary complex. In order for eIF2 to recycle and catalyze another round of initiation, the GDP bound to eIF2 must exchange with GTP by way of a reaction catalyzed by eIF2B. EIF2S1/eIF2-alpha is a key component of the integrated stress response (ISR), required for adaptation to various stress: phosphorylation by metabolic-stress sensing protein kinases (EIF2AK1/HRI, EIF2AK2/PKR, EIF2AK3/PERK and EIF2AK4/GCN2) in response to stress converts EIF2S1/eIF2-alpha in a global protein synthesis inhibitor, leading to a attenuation of cap-dependent translation, while concomitantly initiating the preferential translation of ISR-specific mRNAs, such as the transcriptional activators ATF4 and QRICH1, and hence allowing ATF4- and QRICH1-mediated reprogramming. EIF2S1/eIF2-alpha also acts as an activator of mitophagy in response to mitochondrial damage: phosphorylation by EIF2AK1/HRI promotes relocalization to the mitochondrial surface, thereby triggering PRKN-independent mitophagy. This is Eukaryotic translation initiation factor 2 subunit 1 (EIF2S1) from Sus scrofa (Pig).